The sequence spans 168 residues: Small ribosomal subunit protein uS5 (168 aa).

The 64-residue stretch at 11–74 (YSEKVVKIDR…ESAKKHLVKI (64 aa)) folds into the S5 DRBM domain.

It belongs to the universal ribosomal protein uS5 family. Part of the 30S ribosomal subunit. Contacts proteins S4 and S8.

In terms of biological role, with S4 and S12 plays an important role in translational accuracy. Located at the back of the 30S subunit body where it stabilizes the conformation of the head with respect to the body. The chain is Small ribosomal subunit protein uS5 from Leptospira interrogans serogroup Icterohaemorrhagiae serovar copenhageni (strain Fiocruz L1-130).